Here is a 306-residue protein sequence, read N- to C-terminus: Ribosomal protein L11 methyltransferase (306 aa).

S-adenosyl-L-methionine-binding residues include Thr-139, Gly-173, Asp-195, and Asn-242.

The protein belongs to the methyltransferase superfamily. PrmA family.

It is found in the cytoplasm. It catalyses the reaction L-lysyl-[protein] + 3 S-adenosyl-L-methionine = N(6),N(6),N(6)-trimethyl-L-lysyl-[protein] + 3 S-adenosyl-L-homocysteine + 3 H(+). Its function is as follows. Methylates ribosomal protein L11. The polypeptide is Ribosomal protein L11 methyltransferase (Nostoc sp. (strain PCC 7120 / SAG 25.82 / UTEX 2576)).